The following is a 261-amino-acid chain: Ribosomal RNA small subunit methyltransferase J (261 aa).

S-adenosyl-L-methionine is bound by residues 129–130 (ER) and Asp-182.

Belongs to the methyltransferase superfamily. RsmJ family.

The protein localises to the cytoplasm. The catalysed reaction is guanosine(1516) in 16S rRNA + S-adenosyl-L-methionine = N(2)-methylguanosine(1516) in 16S rRNA + S-adenosyl-L-homocysteine + H(+). Specifically methylates the guanosine in position 1516 of 16S rRNA. This is Ribosomal RNA small subunit methyltransferase J from Desulfotalea psychrophila (strain LSv54 / DSM 12343).